We begin with the raw amino-acid sequence, 210 residues long: Thymidylate kinase (210 aa).

11-18 (GLEGAGKS) lines the ATP pocket.

This sequence belongs to the thymidylate kinase family.

It catalyses the reaction dTMP + ATP = dTDP + ADP. Its function is as follows. Phosphorylation of dTMP to form dTDP in both de novo and salvage pathways of dTTP synthesis. The sequence is that of Thymidylate kinase from Vibrio parahaemolyticus serotype O3:K6 (strain RIMD 2210633).